The primary structure comprises 326 residues: MTQRIAITPGEPAGVGPDLIITIAQQDWPVEMVVIASKALLQERSKALSLPLTIIDYDQHAPAKSQKSGSLTVLDVELTEPCVPGTLNSANGSYVVETLRIASEKNISGEFDAIVTGPVHKGLINKAGIAFSGHTEYFATQANCSDVVMMLATKGLRVALVTTHIPLAYVSKAITYERLQKVTRILHKDLQEKFGIKSPKIYACGINPHAGEDGHLGREEIEIMEPAFAELRADGIDIIGPLPADTIFQEKYLAEADAILAMYHDQGLPVLKYKGFGSSVNITLGLPFIRTSVDHGTALELAGKGTADSGSFIEAMNNAINLASNK.

2 residues coordinate substrate: histidine 134 and threonine 135. Residues histidine 164, histidine 209, and histidine 264 each contribute to the a divalent metal cation site. Substrate-binding residues include lysine 272, asparagine 281, and arginine 290.

This sequence belongs to the PdxA family. As to quaternary structure, homodimer. It depends on Zn(2+) as a cofactor. The cofactor is Mg(2+). Requires Co(2+) as cofactor.

Its subcellular location is the cytoplasm. The enzyme catalyses 4-(phosphooxy)-L-threonine + NAD(+) = 3-amino-2-oxopropyl phosphate + CO2 + NADH. Its pathway is cofactor biosynthesis; pyridoxine 5'-phosphate biosynthesis; pyridoxine 5'-phosphate from D-erythrose 4-phosphate: step 4/5. In terms of biological role, catalyzes the NAD(P)-dependent oxidation of 4-(phosphooxy)-L-threonine (HTP) into 2-amino-3-oxo-4-(phosphooxy)butyric acid which spontaneously decarboxylates to form 3-amino-2-oxopropyl phosphate (AHAP). In Colwellia psychrerythraea (strain 34H / ATCC BAA-681) (Vibrio psychroerythus), this protein is 4-hydroxythreonine-4-phosphate dehydrogenase.